A 147-amino-acid chain; its full sequence is Large ribosomal subunit protein uL13 (147 aa).

This sequence belongs to the universal ribosomal protein uL13 family. Part of the 50S ribosomal subunit.

This protein is one of the early assembly proteins of the 50S ribosomal subunit, although it is not seen to bind rRNA by itself. It is important during the early stages of 50S assembly. The protein is Large ribosomal subunit protein uL13 of Paenarthrobacter aurescens (strain TC1).